The chain runs to 68 residues: Large ribosomal subunit protein bL35 (68 aa).

It belongs to the bacterial ribosomal protein bL35 family.

The polypeptide is Large ribosomal subunit protein bL35 (Rickettsia typhi (strain ATCC VR-144 / Wilmington)).